The primary structure comprises 287 residues: Large ribosomal subunit protein uL2 (287 aa).

The tract at residues 221-287 (RGSVMNPCDH…SKRSRGGRDS (67 aa)) is disordered. Basic residues predominate over residues 258–287 (KTRKKNKPSNKLVVRRRRRISKRSRGGRDS).

The protein belongs to the universal ribosomal protein uL2 family. In terms of assembly, part of the 50S ribosomal subunit. Forms a bridge to the 30S subunit in the 70S ribosome.

Functionally, one of the primary rRNA binding proteins. Required for association of the 30S and 50S subunits to form the 70S ribosome, for tRNA binding and peptide bond formation. It has been suggested to have peptidyltransferase activity; this is somewhat controversial. Makes several contacts with the 16S rRNA in the 70S ribosome. The protein is Large ribosomal subunit protein uL2 of Prochlorococcus marinus subsp. pastoris (strain CCMP1986 / NIES-2087 / MED4).